A 228-amino-acid polypeptide reads, in one-letter code: L-ribulose-5-phosphate 4-epimerase UlaF (228 aa).

Substrate is bound by residues 26–27, 43–44, and 72–73; these read GN, SG, and SS. Zn(2+)-binding residues include D74, H93, and H95. The Proton donor/acceptor role is filled by D118. H167 serves as a coordination point for Zn(2+). Y225 functions as the Proton donor/acceptor in the catalytic mechanism.

The protein belongs to the aldolase class II family. AraD/FucA subfamily. The cofactor is Zn(2+).

The enzyme catalyses L-ribulose 5-phosphate = D-xylulose 5-phosphate. It participates in cofactor degradation; L-ascorbate degradation; D-xylulose 5-phosphate from L-ascorbate: step 4/4. Functionally, catalyzes the isomerization of L-ribulose 5-phosphate to D-xylulose 5-phosphate. Is involved in the anaerobic L-ascorbate utilization. The protein is L-ribulose-5-phosphate 4-epimerase UlaF of Salmonella choleraesuis (strain SC-B67).